Reading from the N-terminus, the 818-residue chain is MEEKDESEQSISAGRQEIRKRRRPSQPMVDKSQQTEVTEKKKQLSIPQSSGPKAALSIGNIPGSKLNYECHRVSSQLQQTWIKRKRVQDMADKSLQTETIAEEKKEEIKLVCEAVVPEEKPAAVEVGPEFPESVREVEVPPNRYSVQVKIDRSQQTTCTGDWTMMNFPQKEKLDKEQQTYFSESEIVVIGWPTNSFSKSKEGAQKRKSSGNIFLSEHPEFQPTTSSNEEIRRPSISRTVSISPTKKDSPVPLEDEKDVPVEVQPPAAEEISAEEQLPLAETTSEEVPVAVQPPPAEEPPLEAQPSPTEEAPGDEAPAKVEPTPAEEALSEKPPAEEALVEIQPSPVEEAAGDEAPAKVEATSSEETLLKEPLTEVQPPAAEEAPIQDTPELQLSPAVEAPAEEAPAEAEPPPAEEAPAEEAPEVQSPPAEEAPAEEPPEIQSPPAEEAPAEEPPEVQSPPAEEAPAEEAPEVQSPPAEEAPAEEPPEVQSPPAEEVPAGEPPEVQSPPAEEAPAEEAPEVQSPPAEEVPAEEALAEVEPPPAEEAPAGEPSEVQSPPAEEAPAEEAPEVQSPPSEEAPAEEAPEVQSVPAGQAPAEEPLEVQPPPAEDATEEEASEVQSLPTDEAPAEEGLGFQSPPADKAPEEEAPEVQSPPAEEAPAEEPPEVQSLPADEAPAEEATEEVQSPPTEESPAEEAPAELQPPSTEETTSEMVSVEKQPSLTEEPFITPISLEETSAEVLLPPFEQTPADEALVENVSPVDQAPKEADVLVEKLESGNLDDKPKSEEPLERDTIPKDSSGTKNEGVSFEIKGVIHIELE.

Residues 1 to 61 are disordered; that stretch reads MEEKDESEQS…PKAALSIGNI (61 aa). Phosphoserine is present on residues Ser25, Ser57, and Ser182. 2 disordered regions span residues 195-727 and 773-805; these read SFSK…PFIT and LESG…NEGV. Composition is skewed to low complexity over residues 490–511, 544–560, and 697–715; these read SPPA…PAEE, EAPA…PAEE, and AELQ…VSVE. Residues 773-794 show a composition bias toward basic and acidic residues; sequence LESGNLDDKPKSEEPLERDTIP.

Interacts with CABYR. Interacts with ROPN1 and ROPN1L; the interaction increases upon spermatozoa capacitation conditions. In terms of processing, phosphorylated by PKA upon spermatozoa capacitation conditions.

The protein localises to the cell projection. The protein resides in the cilium. It localises to the flagellum. Functionally, may be involved in the later stages of fibrous sheath biogenesis and spermatozoa capacitation. Inhibits ROPN1 and ROPN1L SUMOylation. Binds calcium. The polypeptide is Fibrous sheath CABYR-binding protein (Bos taurus (Bovine)).